The chain runs to 86 residues: Toxin Td2 (86 aa).

A signal peptide spans 1–20 (MTRFVLFLNCFFLICMVVEC). Residues 21-83 (KEGYLMGADG…TWDRATNTCG (63 aa)) form the LCN-type CS-alpha/beta domain. Cystine bridges form between cysteine 31/cysteine 82, cysteine 35/cysteine 57, cysteine 43/cysteine 63, and cysteine 47/cysteine 65. Arginine 84 is subject to Arginine amide.

Expressed by the venom gland.

The protein resides in the secreted. Beta toxins bind voltage-independently at site-4 of sodium channels (Nav) and shift the voltage of activation toward more negative potentials thereby affecting sodium channel activation and promoting spontaneous and repetitive firing. The chain is Toxin Td2 from Tityus discrepans (Venezuelan scorpion).